Reading from the N-terminus, the 548-residue chain is Chaperonin GroEL (548 aa).

Residues 30 to 33, Lys-51, 87 to 91, Gly-415, 479 to 481, and Asp-495 each bind ATP; these read TLGP, DGTTT, and NAA.

Belongs to the chaperonin (HSP60) family. Forms a cylinder of 14 subunits composed of two heptameric rings stacked back-to-back. Interacts with the co-chaperonin GroES.

The protein localises to the cytoplasm. It catalyses the reaction ATP + H2O + a folded polypeptide = ADP + phosphate + an unfolded polypeptide.. Functionally, together with its co-chaperonin GroES, plays an essential role in assisting protein folding. The GroEL-GroES system forms a nano-cage that allows encapsulation of the non-native substrate proteins and provides a physical environment optimized to promote and accelerate protein folding. The sequence is that of Chaperonin GroEL from Escherichia fergusonii (strain ATCC 35469 / DSM 13698 / CCUG 18766 / IAM 14443 / JCM 21226 / LMG 7866 / NBRC 102419 / NCTC 12128 / CDC 0568-73).